We begin with the raw amino-acid sequence, 856 residues long: Putative zinc protease C28F5.4 (856 aa).

Residue His-71 participates in Zn(2+) binding. Glu-74 serves as the catalytic Proton acceptor. Residues His-75 and Glu-152 each coordinate Zn(2+).

Belongs to the peptidase M16 family.

This Caenorhabditis elegans protein is Putative zinc protease C28F5.4.